The primary structure comprises 259 residues: MFRKRLVNKSSSDEKNQKKRQKINFSEEKLVASDEEKGSSDLMSLAKSGNSRTLQLSHENEGKLQKKGEDLDKYTLTVNDDSTKEDLLNFERKELAEKAKKRRPSDDNELVLNMSGKNKRLTKQINQPTNIRTTVLMDFQPDVCKDYKQTGYCGYGDSCKFLHSRDDFKTGWKLNQEWNADKEDSKAVTLDLEKIPFKCTLCKEDYKSPVVTNCGHYFCGSCFAKDMKKGTKCFICHKETHGSAKVASDLQKMLNKRKS.

The tract at residues 1-67 is disordered; the sequence is MFRKRLVNKS…HENEGKLQKK (67 aa). Basic and acidic residues predominate over residues 25–39; it reads FSEEKLVASDEEKGS. Ser33 bears the Phosphoserine mark. Over residues 47-57 the composition is skewed to polar residues; it reads KSGNSRTLQLS. Basic and acidic residues predominate over residues 58–67; the sequence is HENEGKLQKK. Ser105 is subject to Phosphoserine. The segment at 138–166 adopts a C3H1-type zinc-finger fold; the sequence is DFQPDVCKDYKQTGYCGYGDSCKFLHSRD. An RING-type zinc finger spans residues 199–237; sequence CTLCKEDYKSPVVTNCGHYFCGSCFAKDMKKGTKCFICH.

Belongs to the CWC24 family. In terms of assembly, belongs to the CWC complex (or CEF1-associated complex), a spliceosome sub-complex reminiscent of a late-stage spliceosome composed of the U2, U5 and U6 snRNAs and at least BUD13, BUD31, BRR2, CDC40, CEF1, CLF1, CUS1, CWC2, CWC15, CWC21, CWC22, CWC23, CWC24, CWC25, CWC27, ECM2, HSH155, IST3, ISY1, LEA1, MSL1, NTC20, PRP8, PRP9, PRP11, PRP19, PRP21, PRP22, PRP45, PRP46, SLU7, SMB1, SMD1, SMD2, SMD3, SMX2, SMX3, SNT309, SNU114, SPP2, SYF1, SYF2, RSE1 and YJU2.

Its subcellular location is the nucleus. Involved in pre-mRNA splicing. This Saccharomyces cerevisiae (strain ATCC 204508 / S288c) (Baker's yeast) protein is Pre-mRNA-splicing factor CWC24 (CWC24).